The sequence spans 472 residues: Alanine--anticapsin ligase (472 aa).

A Mg(2+)-binding site is contributed by glutamate 109. ATP contacts are provided by lysine 138 and lysine 178. Residues 142 to 355 form the ATP-grasp domain; sequence RAAFNRAGVK…MAQLLLDVLC (214 aa). Residue leucine 182 coordinates Mg(2+). ATP is bound by residues 184–185, 226–229, and glutamine 268; these read SS and EEFL. Residues glutamate 273 and 309 to 311 contribute to the substrate site; that span reads HTE. Residues glutamate 311 and glutamate 324 each coordinate Mg(2+). 328–331 is a substrate binding site; the sequence is RFAG.

As to quaternary structure, monomer or homodimer. It depends on Mg(2+) as a cofactor.

It catalyses the reaction L-anticapsin + L-alanine + ATP = bacilysin + ADP + phosphate + H(+). The protein operates within antibiotic biosynthesis; bacilysin biosynthesis. In terms of biological role, part of the bacABCDEFG operon responsible for the biosynthesis of bacilysin, an irreversible inactivator of the glutaminase domain of glucosamine synthetase. Catalyzes the formation of alpha-dipeptides from various L-amino acids in the presence of ATP. In vivo catalyzes the ligation of L-alanine and L-anticapsin (epoxycyclohexanonyl-Ala) to produce the final bacilysin antibiotic (L-Ala-L-4S-cyclohexenonyl-Ala dipeptide). This chain is Alanine--anticapsin ligase, found in Bacillus amyloliquefaciens (Bacillus velezensis).